The sequence spans 353 residues: Inactive metacaspase-4 (353 aa).

Glycine 2 carries the N-myristoyl glycine lipid modification.

This sequence belongs to the peptidase C14B family. In terms of processing, palmitoylated. Proteolytic cleavage by MCA3 occurs prior or during secretion and requires MCA4 membrane localization. Cleavage is dispensable for secretion and parasite growth and virulence in the mammalian host. In vitro, can be cleaved by MCA2 but specifically cleaved by MCA3 in vivo.

Its subcellular location is the cell projection. The protein resides in the cilium. It localises to the flagellum membrane. It is found in the secreted. Its function is as follows. Inactive metacaspase which plays a role in parasite bloodstream form growth and in parasite virulence within the mammalian host. The protein is Inactive metacaspase-4 of Trypanosoma brucei brucei.